We begin with the raw amino-acid sequence, 694 residues long: Elongation factor G (694 aa).

A tr-type G domain is found at 8 to 283; the sequence is ERYRNIGIMA…AVIDYLPAPV (276 aa). Residues 17–24, 81–85, and 135–138 contribute to the GTP site; these read AHIDAGKT, DTPGH, and NKMD.

Belongs to the TRAFAC class translation factor GTPase superfamily. Classic translation factor GTPase family. EF-G/EF-2 subfamily.

It localises to the cytoplasm. Functionally, catalyzes the GTP-dependent ribosomal translocation step during translation elongation. During this step, the ribosome changes from the pre-translocational (PRE) to the post-translocational (POST) state as the newly formed A-site-bound peptidyl-tRNA and P-site-bound deacylated tRNA move to the P and E sites, respectively. Catalyzes the coordinated movement of the two tRNA molecules, the mRNA and conformational changes in the ribosome. This chain is Elongation factor G, found in Paramagnetospirillum magneticum (strain ATCC 700264 / AMB-1) (Magnetospirillum magneticum).